The sequence spans 56 residues: Small ribosomal subunit protein uS14 (56 aa).

Positions 21, 24, 39, and 42 each coordinate Zn(2+).

This sequence belongs to the universal ribosomal protein uS14 family. Requires Zn(2+) as cofactor.

The chain is Small ribosomal subunit protein uS14 (RPS29) from Triticum aestivum (Wheat).